A 363-amino-acid chain; its full sequence is Serine/threonine-protein kinase SRK2A (363 aa).

One can recognise a Protein kinase domain in the interval tyrosine 4–phenylalanine 260. ATP is bound by residues isoleucine 10–alanine 18 and lysine 33. Aspartate 123 serves as the catalytic Proton acceptor. The interval serine 306–serine 363 is disordered. Gly residues predominate over residues glycine 310–aspartate 319. Positions glycine 322 to tyrosine 347 are enriched in acidic residues. Residues aspartate 348 to serine 363 show a composition bias toward basic and acidic residues.

It belongs to the protein kinase superfamily. Ser/Thr protein kinase family. In terms of assembly, interacts with TOPP1. Expressed in seedlings.

It catalyses the reaction L-seryl-[protein] + ATP = O-phospho-L-seryl-[protein] + ADP + H(+). It carries out the reaction L-threonyl-[protein] + ATP = O-phospho-L-threonyl-[protein] + ADP + H(+). The protein is Serine/threonine-protein kinase SRK2A (SRK2A) of Arabidopsis thaliana (Mouse-ear cress).